We begin with the raw amino-acid sequence, 203 residues long: Holliday junction branch migration complex subunit RuvA (203 aa).

A domain I region spans residues 1 to 65; it reads MIAYIHGKLL…EDAFDLYGFP (65 aa). A domain II region spans residues 66 to 144; the sequence is CFDDREVFRT…TLKSATVRSG (79 aa). Residues 145-155 are flexible linker; sequence ACPVEGDRSEF. The interval 155-203 is domain III; it reads FLDALSGLRNLGYGDDEVRDFLKDIFDEEPDLDAGGAIRVALKKISQNK.

It belongs to the RuvA family. Homotetramer. Forms an RuvA(8)-RuvB(12)-Holliday junction (HJ) complex. HJ DNA is sandwiched between 2 RuvA tetramers; dsDNA enters through RuvA and exits via RuvB. An RuvB hexamer assembles on each DNA strand where it exits the tetramer. Each RuvB hexamer is contacted by two RuvA subunits (via domain III) on 2 adjacent RuvB subunits; this complex drives branch migration. In the full resolvosome a probable DNA-RuvA(4)-RuvB(12)-RuvC(2) complex forms which resolves the HJ.

It localises to the cytoplasm. Its function is as follows. The RuvA-RuvB-RuvC complex processes Holliday junction (HJ) DNA during genetic recombination and DNA repair, while the RuvA-RuvB complex plays an important role in the rescue of blocked DNA replication forks via replication fork reversal (RFR). RuvA specifically binds to HJ cruciform DNA, conferring on it an open structure. The RuvB hexamer acts as an ATP-dependent pump, pulling dsDNA into and through the RuvAB complex. HJ branch migration allows RuvC to scan DNA until it finds its consensus sequence, where it cleaves and resolves the cruciform DNA. In Maridesulfovibrio salexigens (strain ATCC 14822 / DSM 2638 / NCIMB 8403 / VKM B-1763) (Desulfovibrio salexigens), this protein is Holliday junction branch migration complex subunit RuvA.